A 219-amino-acid chain; its full sequence is Probable nicotinate-nucleotide adenylyltransferase (219 aa).

Belongs to the NadD family.

It catalyses the reaction nicotinate beta-D-ribonucleotide + ATP + H(+) = deamido-NAD(+) + diphosphate. Its pathway is cofactor biosynthesis; NAD(+) biosynthesis; deamido-NAD(+) from nicotinate D-ribonucleotide: step 1/1. In terms of biological role, catalyzes the reversible adenylation of nicotinate mononucleotide (NaMN) to nicotinic acid adenine dinucleotide (NaAD). In Pseudomonas putida (strain W619), this protein is Probable nicotinate-nucleotide adenylyltransferase.